We begin with the raw amino-acid sequence, 203 residues long: Probable chemoreceptor glutamine deamidase CheD (203 aa).

Belongs to the CheD family.

The enzyme catalyses L-glutaminyl-[protein] + H2O = L-glutamyl-[protein] + NH4(+). In terms of biological role, probably deamidates glutamine residues to glutamate on methyl-accepting chemotaxis receptors (MCPs), playing an important role in chemotaxis. The sequence is that of Probable chemoreceptor glutamine deamidase CheD from Janthinobacterium sp. (strain Marseille) (Minibacterium massiliensis).